A 249-amino-acid polypeptide reads, in one-letter code: uncharacterized protein (249 aa).

This is an uncharacterized protein from Colorado tick fever virus (strain USA/Florio N-7180) (CTFV).